The following is a 233-amino-acid chain: MSEAKNLLAQGLWKNNSALVQLLGLCPLLAVSSTATNALGLGLATTLVLVCTNTAVSALRRWVPSEIRIPIYVMIIASVVSTVQMLINAYAFGLYQSLGIFIPLIVTNCIVIGRAEAYAAKNPVGLSALDGFAMGMGATCALFVLGALREILGNGTLFDGADMLLGSWATVLRIDILHLDTPFLLAMLPPGAFIGLGLLLAGKYVIDEKMKARKANTRVSVPQLQDGDAEKAL.

The next 6 helical transmembrane spans lie at 18–38, 39–59, 69–89, 92–112, 128–148, and 182–202; these read ALVQ…ATNA, LGLG…VSAL, IPIY…LINA, FGLY…CIVI, ALDG…LGAL, and PFLL…LLAG.

Belongs to the NqrDE/RnfAE family. The complex is composed of six subunits: RnfA, RnfB, RnfC, RnfD, RnfE and RnfG.

The protein resides in the cell inner membrane. Its function is as follows. Part of a membrane-bound complex that couples electron transfer with translocation of ions across the membrane. This is Ion-translocating oxidoreductase complex subunit E from Yersinia pseudotuberculosis serotype O:1b (strain IP 31758).